Consider the following 448-residue polypeptide: Glutamate--tRNA ligase 2 (448 aa).

A 'HIGH' region motif is present at residues 9 to 19; it reads PSPTGKLHIGN. Residues 240 to 244 carry the 'KMSKS' region motif; that stretch reads KISKR. ATP is bound at residue lysine 243.

The protein belongs to the class-I aminoacyl-tRNA synthetase family. Glutamate--tRNA ligase type 1 subfamily. In terms of assembly, monomer.

Its subcellular location is the cytoplasm. It carries out the reaction tRNA(Glu) + L-glutamate + ATP = L-glutamyl-tRNA(Glu) + AMP + diphosphate. Its function is as follows. Catalyzes the attachment of glutamate to tRNA(Glu) in a two-step reaction: glutamate is first activated by ATP to form Glu-AMP and then transferred to the acceptor end of tRNA(Glu). This chain is Glutamate--tRNA ligase 2, found in Orientia tsutsugamushi (strain Boryong) (Rickettsia tsutsugamushi).